A 224-amino-acid chain; its full sequence is MTQVKPKEVDEISLQLVVGLGNPGPQYANTRHNCGFMVVDRLAQRWGIPLVLEKRFQGSYGEGFALGGKRRLLKPETYMNRSGQSVRAVLDWYKLDLASVLVVYDDMDLPLGRLRLRGSGSAGGHNGMKSIIQHLGSEAFPRLRLGVGKPKGSQDVVGHVLGGFAPAEQEVLERVLDVAVEAVECCWQEGLRTAMNRFNPLDLSGPSSDLDGSNPAPGHGEASS.

Residue Tyr-27 participates in tRNA binding. The active-site Proton acceptor is the His-32. 3 residues coordinate tRNA: Tyr-78, Asn-80, and Asn-126. The span at 203–215 (LSGPSSDLDGSNP) shows a compositional bias: low complexity. Residues 203 to 224 (LSGPSSDLDGSNPAPGHGEASS) are disordered.

The protein belongs to the PTH family. Monomer.

The protein resides in the cytoplasm. The catalysed reaction is an N-acyl-L-alpha-aminoacyl-tRNA + H2O = an N-acyl-L-amino acid + a tRNA + H(+). Hydrolyzes ribosome-free peptidyl-tRNAs (with 1 or more amino acids incorporated), which drop off the ribosome during protein synthesis, or as a result of ribosome stalling. Its function is as follows. Catalyzes the release of premature peptidyl moieties from peptidyl-tRNA molecules trapped in stalled 50S ribosomal subunits, and thus maintains levels of free tRNAs and 50S ribosomes. The sequence is that of Peptidyl-tRNA hydrolase from Synechococcus sp. (strain JA-2-3B'a(2-13)) (Cyanobacteria bacterium Yellowstone B-Prime).